The chain runs to 373 residues: Mitochondrial fission regulator 2 (373 aa).

Position 136 is a phosphoserine (serine 136). The stretch at 151–179 (VSEAAIKKIAALEDELTSLRAQIAAIVAM) forms a coiled coil. 2 disordered regions span residues 189–331 (GFIS…WDPV) and 346–373 (DDSF…GSRF). Over residues 224–239 (SPPPLPPPPPPLPPPQ) the composition is skewed to pro residues. 2 stretches are compositionally biased toward basic and acidic residues: residues 275-287 (KKTD…ESQR) and 297-310 (VLKD…RPVE). Serine 312 and serine 348 each carry phosphoserine. A compositionally biased stretch (polar residues) spans 354–373 (RSWQGSPFSSPETSRNGSRF).

This sequence belongs to the MTFR1 family.

The protein localises to the mitochondrion. Its function is as follows. May play a role in mitochondrial aerobic respiration essentially in the testis. Can also promote mitochondrial fission. This chain is Mitochondrial fission regulator 2 (Mtfr2), found in Rattus norvegicus (Rat).